The chain runs to 1260 residues: uncharacterized protein (1260 aa).

Its subcellular location is the plastid. It localises to the chloroplast. This is an uncharacterized protein from Ostreococcus tauri.